Reading from the N-terminus, the 289-residue chain is UPF0276 protein BP2925 (289 aa).

This sequence belongs to the UPF0276 family.

The sequence is that of UPF0276 protein BP2925 from Bordetella pertussis (strain Tohama I / ATCC BAA-589 / NCTC 13251).